We begin with the raw amino-acid sequence, 312 residues long: Methionyl-tRNA formyltransferase (312 aa).

110–113 (SLLP) is a (6S)-5,6,7,8-tetrahydrofolate binding site.

It belongs to the Fmt family.

It catalyses the reaction L-methionyl-tRNA(fMet) + (6R)-10-formyltetrahydrofolate = N-formyl-L-methionyl-tRNA(fMet) + (6S)-5,6,7,8-tetrahydrofolate + H(+). Functionally, attaches a formyl group to the free amino group of methionyl-tRNA(fMet). The formyl group appears to play a dual role in the initiator identity of N-formylmethionyl-tRNA by promoting its recognition by IF2 and preventing the misappropriation of this tRNA by the elongation apparatus. The chain is Methionyl-tRNA formyltransferase from Streptococcus suis (strain 05ZYH33).